Consider the following 350-residue polypeptide: Protein RecA (350 aa).

66 to 73 (GPESSGKT) provides a ligand contact to ATP.

It belongs to the RecA family.

It localises to the cytoplasm. Can catalyze the hydrolysis of ATP in the presence of single-stranded DNA, the ATP-dependent uptake of single-stranded DNA by duplex DNA, and the ATP-dependent hybridization of homologous single-stranded DNAs. It interacts with LexA causing its activation and leading to its autocatalytic cleavage. The chain is Protein RecA from Nocardioides sp. (strain ATCC BAA-499 / JS614).